The sequence spans 275 residues: Nitrogenase iron protein (275 aa).

9 to 16 (GKGGIGKS) contacts ATP. Cys-97 serves as a coordination point for [4Fe-4S] cluster. Arg-100 carries the ADP-ribosylarginine; by dinitrogenase reductase ADP-ribosyltransferase modification. Cys-132 is a binding site for [4Fe-4S] cluster.

The protein belongs to the NifH/BchL/ChlL family. As to quaternary structure, homodimer. [4Fe-4S] cluster serves as cofactor. In terms of processing, the reversible ADP-ribosylation of Arg-100 inactivates the nitrogenase reductase and regulates nitrogenase activity.

It carries out the reaction N2 + 8 reduced [2Fe-2S]-[ferredoxin] + 16 ATP + 16 H2O = H2 + 8 oxidized [2Fe-2S]-[ferredoxin] + 2 NH4(+) + 16 ADP + 16 phosphate + 6 H(+). Functionally, the key enzymatic reactions in nitrogen fixation are catalyzed by the nitrogenase complex, which has 2 components: the iron protein and the molybdenum-iron protein. The protein is Nitrogenase iron protein (nifH) of Methanococcus maripaludis (Methanococcus deltae).